Reading from the N-terminus, the 494-residue chain is MFQVQKELAGHEAVIIALFEEEKMSSFVQELDKAFEGQLQVLLEEKELSTKKKAISKVHSLGKTNVKRYYFVGLGKKESYTTETLRAALGKAFKTLQAAKVQDAAMLLDSFVTEKLDAIDVAHIAAEVQGLGTYELQTYKSDKKDCVELEKFTAITAEDAQEIEAALTVGYVHGRATNSARTLVNMPPNVLTATKLAEYAVELAEKYDMDYKVLEKEEMEDLGMGALLAVNQGSVEPPKMIALIYKGKEEWTDVIGFVGKGITYDTGGYSLKPREGMVGMKGDMGGAAAVLGAMEIIGELRPEQNVIAVIPSTDNVVSGTAFKPDDVITSMSGKTIEVLNTDAEGRLALADGITYAKKLGANYLVDVATLTGGVIVALGNYTTGAMTNNEELFEQVLEASMETDEPIWQLPIFDRDKERVRNSKFADLNNSPGREGHAVMAGTFLGEFAEDTPWVHLDIAGTSETKGAHDLGPAGATGAMVRTLATLVERFGEE.

Mn(2+)-binding residues include K260 and D265. K272 is a catalytic residue. D283, D342, and E344 together coordinate Mn(2+). R346 is an active-site residue.

This sequence belongs to the peptidase M17 family. Mn(2+) serves as cofactor.

The protein resides in the cytoplasm. The catalysed reaction is Release of an N-terminal amino acid, Xaa-|-Yaa-, in which Xaa is preferably Leu, but may be other amino acids including Pro although not Arg or Lys, and Yaa may be Pro. Amino acid amides and methyl esters are also readily hydrolyzed, but rates on arylamides are exceedingly low.. It catalyses the reaction Release of an N-terminal amino acid, preferentially leucine, but not glutamic or aspartic acids.. Presumably involved in the processing and regular turnover of intracellular proteins. Catalyzes the removal of unsubstituted N-terminal amino acids from various peptides. The chain is Probable cytosol aminopeptidase from Bacillus cereus (strain B4264).